Here is a 125-residue protein sequence, read N- to C-terminus: Fatty acid-binding protein, liver-type (125 aa).

It belongs to the calycin superfamily. Fatty-acid binding protein (FABP) family.

It is found in the cytoplasm. The protein is Fatty acid-binding protein, liver-type (fabp1) of Takifugu rubripes (Japanese pufferfish).